A 307-amino-acid chain; its full sequence is Ribosomal RNA small subunit methyltransferase H (307 aa).

Residues 33–35, D51, F82, D96, and Q103 each bind S-adenosyl-L-methionine; that span reads GGY.

It belongs to the methyltransferase superfamily. RsmH family.

The protein resides in the cytoplasm. It catalyses the reaction cytidine(1402) in 16S rRNA + S-adenosyl-L-methionine = N(4)-methylcytidine(1402) in 16S rRNA + S-adenosyl-L-homocysteine + H(+). Functionally, specifically methylates the N4 position of cytidine in position 1402 (C1402) of 16S rRNA. This chain is Ribosomal RNA small subunit methyltransferase H, found in Rickettsia peacockii (strain Rustic).